The chain runs to 146 residues: UPF0260 protein VP2169 (146 aa).

Belongs to the UPF0260 family.

This is UPF0260 protein VP2169 from Vibrio parahaemolyticus serotype O3:K6 (strain RIMD 2210633).